A 209-amino-acid chain; its full sequence is MANKKRSASSSRWLQEHFSDKYVQQAKKKGFRSRAWFKLEEIQQSDNIFKPGMTVVDLGAAPGGWSQYVVQQLGNKGRIIACDLLPMDPIVGVDFLQGDFRDELVLKALLDRVGDNKVQVVMSDMAPNMSGTPAVDIPRSMYLVELALDMCRDVLAPGGSFIVKVFQGEGFDEYLGQIRSLFTKVKVRKPDASRSRSREVYIVATGRKL.

Positions 63, 65, 83, 99, and 124 each coordinate S-adenosyl-L-methionine. The Proton acceptor role is filled by Lys-164.

Belongs to the class I-like SAM-binding methyltransferase superfamily. RNA methyltransferase RlmE family.

It localises to the cytoplasm. The catalysed reaction is uridine(2552) in 23S rRNA + S-adenosyl-L-methionine = 2'-O-methyluridine(2552) in 23S rRNA + S-adenosyl-L-homocysteine + H(+). Its function is as follows. Specifically methylates the uridine in position 2552 of 23S rRNA at the 2'-O position of the ribose in the fully assembled 50S ribosomal subunit. This chain is Ribosomal RNA large subunit methyltransferase E, found in Proteus mirabilis (strain HI4320).